Consider the following 1124-residue polypeptide: Angiopoietin-1 receptor (1124 aa).

The N-terminal stretch at Met1–Gly22 is a signal peptide. Residues Ala23–Leu748 are Extracellular-facing. An intrachain disulfide couples Cys44 to Cys102. Positions Cys44–Ser123 constitute an Ig-like C2-type 1 domain. N-linked (GlcNAc...) asparagine glycans are attached at residues Asn140 and Asn158. EGF-like domains lie at Arg210–Glu252, Ala254–Asn299, and Ala301–Glu341. 13 disulfide bridges follow: Cys211-Cys220, Cys224-Cys233, Cys227-Cys240, Cys242-Cys251, Cys255-Cys264, Cys268-Cys274, Cys280-Cys287, Cys289-Cys298, Cys302-Cys311, Cys315-Cys323, Cys317-Cys329, Cys331-Cys340, and Cys370-Cys424. Residues Pro350 to Ser440 form the Ig-like C2-type 2 domain. 7 N-linked (GlcNAc...) asparagine glycosylation sites follow: Asn399, Asn438, Asn464, Asn560, Asn596, Asn649, and Asn691. 3 consecutive Fibronectin type-III domains span residues Pro447 to Ile541, Pro545 to Asp636, and Gln641 to Ser735. A helical transmembrane segment spans residues Ile749–Ile769. The Cytoplasmic segment spans residues Leu770–Ala1124. Residues Ile824 to Leu1096 enclose the Protein kinase domain. ATP contacts are provided by residues Ile830 to Val838 and Lys855. Position 860 is a phosphotyrosine; by autocatalysis (Tyr860). Asp964 acts as the Proton acceptor in catalysis. 3 positions are modified to phosphotyrosine; by autocatalysis: Tyr992, Tyr1102, and Tyr1108.

It belongs to the protein kinase superfamily. Tyr protein kinase family. Tie subfamily. Homodimer. Heterodimer with TIE1. Interacts with ANGPT1, ANGPT2 and ANGPT4. At cell-cell contacts in quiescent cells, forms a signaling complex composed of ANGPT1 plus TEK molecules from two adjoining cells. In the absence of endothelial cell-cell contacts, interaction with ANGPT1 mediates contacts with the extracellular matrix. Interacts with PTPRB; this promotes endothelial cell-cell adhesion. Interacts with DOK2, GRB2, GRB7, GRB14, PIK3R1 and PTPN11/SHP2. Colocalizes with DOK2 at contacts with the extracellular matrix in migrating cells. Interacts (tyrosine phosphorylated) with TNIP2. Interacts (tyrosine phosphorylated) with SHC1 (via SH2 domain). In terms of processing, proteolytic processing leads to the shedding of the extracellular domain (soluble TIE-2 alias sTIE-2). Post-translationally, autophosphorylated on tyrosine residues in response to ligand binding. Autophosphorylation occurs in trans, i.e. one subunit of the dimeric receptor phosphorylates tyrosine residues on the other subunit. Autophosphorylation occurs in a sequential manner, where Tyr-992 in the kinase activation loop is phosphorylated first, followed by autophosphorylation at Tyr-1108 and at additional tyrosine residues. ANGPT1-induced phosphorylation is impaired during hypoxia, due to increased expression of ANGPT2. Phosphorylation is important for interaction with GRB14, PIK3R1 and PTPN11. Phosphorylation at Tyr-1102 is important for interaction with SHC1, GRB2 and GRB7. Phosphorylation at Tyr-1108 is important for interaction with DOK2 and for coupling to downstream signal transduction pathways in endothelial cells. Dephosphorylated by PTPRB. Ubiquitinated. The phosphorylated receptor is ubiquitinated and internalized, leading to its degradation. Detected in umbilical vein endothelial cells. Proteolytic processing gives rise to a soluble extracellular domain that is detected in blood plasma (at protein level). Predominantly expressed in endothelial cells and their progenitors, the angioblasts. Has been directly found in placenta and lung, with a lower level in umbilical vein endothelial cells, brain and kidney.

The protein localises to the cell membrane. Its subcellular location is the cell junction. The protein resides in the focal adhesion. It localises to the cytoplasm. It is found in the cytoskeleton. The protein localises to the secreted. The enzyme catalyses L-tyrosyl-[protein] + ATP = O-phospho-L-tyrosyl-[protein] + ADP + H(+). Its activity is regulated as follows. Angiopoietin binding leads to receptor dimerization and activation by autophosphorylation at Tyr-992 on the kinase activation loop. Inhibited by staurosporine, K252a, PP2, damnacanthal, SB203580, CEP-11207, CEP-11981 and CE-245677. Inhibited by triazine, thienopyrimidine and thiazolopyrimidine derivatives. Its function is as follows. Tyrosine-protein kinase that acts as a cell-surface receptor for ANGPT1, ANGPT2 and ANGPT4 and regulates angiogenesis, endothelial cell survival, proliferation, migration, adhesion and cell spreading, reorganization of the actin cytoskeleton, but also maintenance of vascular quiescence. Has anti-inflammatory effects by preventing the leakage of pro-inflammatory plasma proteins and leukocytes from blood vessels. Required for normal angiogenesis and heart development during embryogenesis. Required for post-natal hematopoiesis. After birth, activates or inhibits angiogenesis, depending on the context. Inhibits angiogenesis and promotes vascular stability in quiescent vessels, where endothelial cells have tight contacts. In quiescent vessels, ANGPT1 oligomers recruit TEK to cell-cell contacts, forming complexes with TEK molecules from adjoining cells, and this leads to preferential activation of phosphatidylinositol 3-kinase and the AKT1 signaling cascades. In migrating endothelial cells that lack cell-cell adhesions, ANGT1 recruits TEK to contacts with the extracellular matrix, leading to the formation of focal adhesion complexes, activation of PTK2/FAK and of the downstream kinases MAPK1/ERK2 and MAPK3/ERK1, and ultimately to the stimulation of sprouting angiogenesis. ANGPT1 signaling triggers receptor dimerization and autophosphorylation at specific tyrosine residues that then serve as binding sites for scaffold proteins and effectors. Signaling is modulated by ANGPT2 that has lower affinity for TEK, can promote TEK autophosphorylation in the absence of ANGPT1, but inhibits ANGPT1-mediated signaling by competing for the same binding site. Signaling is also modulated by formation of heterodimers with TIE1, and by proteolytic processing that gives rise to a soluble TEK extracellular domain. The soluble extracellular domain modulates signaling by functioning as decoy receptor for angiopoietins. TEK phosphorylates DOK2, GRB7, GRB14, PIK3R1; SHC1 and TIE1. This Homo sapiens (Human) protein is Angiopoietin-1 receptor.